The sequence spans 86 residues: DNA-directed RNA polymerase subunit Rpo11 (86 aa).

It belongs to the archaeal Rpo11/eukaryotic RPB11/RPC19 RNA polymerase subunit family. In terms of assembly, part of the RNA polymerase complex.

The protein localises to the cytoplasm. It carries out the reaction RNA(n) + a ribonucleoside 5'-triphosphate = RNA(n+1) + diphosphate. Functionally, DNA-dependent RNA polymerase (RNAP) catalyzes the transcription of DNA into RNA using the four ribonucleoside triphosphates as substrates. In Archaeoglobus fulgidus (strain ATCC 49558 / DSM 4304 / JCM 9628 / NBRC 100126 / VC-16), this protein is DNA-directed RNA polymerase subunit Rpo11.